The primary structure comprises 393 residues: Digeranylgeranylglycerophospholipid reductase 2 (393 aa).

FAD-binding residues include Asp-33, Cys-44, Ala-45, Gly-47, Arg-100, Ala-124, Asp-280, Gly-292, and Ile-293.

This sequence belongs to the geranylgeranyl reductase family. DGGGPL reductase subfamily. Requires FAD as cofactor.

It carries out the reaction a 2,3-bis-O-phytanyl-sn-glycerol 1-phospholipid + 8 A = a 2,3-bis-O-(geranylgeranyl)-sn-glycerol 1-phospholipid + 8 AH2. The enzyme catalyses 2,3-bis-O-(phytanyl)-sn-glycerol 1-phosphate + 8 A = 2,3-bis-O-(geranylgeranyl)-sn-glycerol 1-phosphate + 8 AH2. It catalyses the reaction CDP-2,3-bis-O-(geranylgeranyl)-sn-glycerol + 8 AH2 = CDP-2,3-bis-O-(phytanyl)-sn-glycerol + 8 A. The catalysed reaction is archaetidylserine + 8 AH2 = 2,3-bis-O-phytanyl-sn-glycero-3-phospho-L-serine + 8 A. Its pathway is membrane lipid metabolism; glycerophospholipid metabolism. Is involved in the reduction of 2,3-digeranylgeranylglycerophospholipids (unsaturated archaeols) into 2,3-diphytanylglycerophospholipids (saturated archaeols) in the biosynthesis of archaeal membrane lipids. Catalyzes the formation of archaetidic acid (2,3-di-O-phytanyl-sn-glyceryl phosphate) from 2,3-di-O-geranylgeranylglyceryl phosphate (DGGGP) via the hydrogenation of each double bond of the isoprenoid chains. Is also probably able to reduce double bonds of geranyl groups in CDP-2,3-bis-O-(geranylgeranyl)-sn-glycerol and archaetidylserine, thus acting at various stages in the biosynthesis of archaeal membrane lipids. The protein is Digeranylgeranylglycerophospholipid reductase 2 of Methanosphaera stadtmanae (strain ATCC 43021 / DSM 3091 / JCM 11832 / MCB-3).